We begin with the raw amino-acid sequence, 522 residues long: Maturase K (522 aa).

Belongs to the intron maturase 2 family. MatK subfamily.

The protein localises to the plastid. The protein resides in the chloroplast. Its function is as follows. Usually encoded in the trnK tRNA gene intron. Probably assists in splicing its own and other chloroplast group II introns. This Micranthus junceus (Micranthus plantagineus var. junceus) protein is Maturase K.